Consider the following 31-residue polypeptide: Cytochrome b6-f complex subunit 6 (31 aa).

Residues 3-23 (ALIGYILLMTLMFSLAAGLYF) form a helical membrane-spanning segment.

Belongs to the PetL family. The 4 large subunits of the cytochrome b6-f complex are cytochrome b6, subunit IV (17 kDa polypeptide, PetD), cytochrome f and the Rieske protein, while the 4 small subunits are PetG, PetL, PetM and PetN. The complex functions as a dimer.

It is found in the plastid. The protein localises to the chloroplast thylakoid membrane. In terms of biological role, component of the cytochrome b6-f complex, which mediates electron transfer between photosystem II (PSII) and photosystem I (PSI), cyclic electron flow around PSI, and state transitions. PetL is important for photoautotrophic growth as well as for electron transfer efficiency and stability of the cytochrome b6-f complex. The protein is Cytochrome b6-f complex subunit 6 of Emiliania huxleyi (Coccolithophore).